The following is a 26-amino-acid chain: MAQDIISTISDLVKWIIDTVNKFTKK.

M1 carries the N-formylmethionine modification.

The protein belongs to the delta-lysin family.

It is found in the secreted. The protein resides in the host cell membrane. Lyses erythrocytes and many other mammalian cells. The polypeptide is Delta-hemolysin (hld) (Staphylococcus aureus (strain MSSA476)).